A 496-amino-acid chain; its full sequence is Deoxyribodipyrimidine photo-lyase (496 aa).

Residues 28 to 160 form the Photolyase/cryptochrome alpha/beta domain; the sequence is GPVVYWMFRD…EVDAHNVVPM (133 aa). Residues Y256, 269–273, 307–315, and 415–417 each bind FAD; these read LSGLS, ELIVRRELS, and DGR. A DNA-binding site is contributed by E307.

It belongs to the DNA photolyase class-2 family. FAD is required as a cofactor. As to expression, highly expressed in flowers. Expressed in roots and stems.

The protein localises to the nucleus. It carries out the reaction cyclobutadipyrimidine (in DNA) = 2 pyrimidine residues (in DNA).. Involved in repair of UV radiation-induced DNA damage. Catalyzes the light-dependent monomerization (300-600 nm) of cyclobutylpyrimidine dimers (CPDs), which are formed between adjacent bases on the same DNA strand upon exposure to ultraviolet radiation. Required for plant survival in the presence of UV-B light. Not involved in the repair of (6-4) photoproducts. The sequence is that of Deoxyribodipyrimidine photo-lyase (PHR1) from Arabidopsis thaliana (Mouse-ear cress).